We begin with the raw amino-acid sequence, 262 residues long: Acyl-[acyl-carrier-protein]--UDP-N-acetylglucosamine O-acyltransferase (262 aa).

Belongs to the transferase hexapeptide repeat family. LpxA subfamily. In terms of assembly, homotrimer.

It localises to the cytoplasm. It catalyses the reaction a (3R)-hydroxyacyl-[ACP] + UDP-N-acetyl-alpha-D-glucosamine = a UDP-3-O-[(3R)-3-hydroxyacyl]-N-acetyl-alpha-D-glucosamine + holo-[ACP]. It participates in glycolipid biosynthesis; lipid IV(A) biosynthesis; lipid IV(A) from (3R)-3-hydroxytetradecanoyl-[acyl-carrier-protein] and UDP-N-acetyl-alpha-D-glucosamine: step 1/6. Functionally, involved in the biosynthesis of lipid A, a phosphorylated glycolipid that anchors the lipopolysaccharide to the outer membrane of the cell. The sequence is that of Acyl-[acyl-carrier-protein]--UDP-N-acetylglucosamine O-acyltransferase from Salmonella arizonae (strain ATCC BAA-731 / CDC346-86 / RSK2980).